Here is a 458-residue protein sequence, read N- to C-terminus: Selection and upkeep of intraepithelial T-cells protein 3 (458 aa).

Positions 1–24 (MGSIQIIFAAYCVVLCVLQMLVLS) are cleaved as a signal peptide. Residues 25–237 (SEQFTITGLE…ESISIVLTGD (213 aa)) are Extracellular-facing. Residues 26 to 141 (EQFTITGLER…EEHITEVKVT (116 aa)) form the Ig-like V-type domain. 2 cysteine pairs are disulfide-bonded: cysteine 49–cysteine 123 and cysteine 163–cysteine 217. The Ig-like C1-type domain maps to 142 to 231 (ATSSDIKIIM…LLTHQEESIS (90 aa)). Asparagine 200 carries N-linked (GlcNAc...) asparagine glycosylation. Residues 238–258 (LFSWKIDWILILSIIACVMIP) traverse the membrane as a helical segment. The Cytoplasmic segment spans residues 259–283 (YSMTSYLQQHLIHGSCSQRSHHWRK). Residues 284–304 (NAMVCMSSVIAIIGSMLILHL) form a helical membrane-spanning segment. The Extracellular segment spans residues 305-324 (KQRVPISDQHFELDTLYLED). Residues 325 to 345 (ISVILCVVIVFNLKLNLLTYY) form a helical membrane-spanning segment. Over 346-359 (RLERKYDGCTPGCK) the chain is Cytoplasmic. The helical transmembrane segment at 360-380 (ACFYILKIIIIILPFVFTFGC) threads the bilayer. The Extracellular portion of the chain corresponds to 381–414 (YNAIFLKYHQLQKKVSIPDPLYYFYTSWLVNMEM). A helical membrane pass occupies residues 415-435 (LGVFLVFFPTFINLIEFSQFI). Topologically, residues 436-458 (KTVPKPIWLCQENMREDDAIRHR) are cytoplasmic.

The protein belongs to the SKINT family. Expressed in skin and thymus.

It localises to the membrane. May act by engaging a cell surface molecule on immature T-cells in the embryonic thymus. The protein is Selection and upkeep of intraepithelial T-cells protein 3 (Skint3) of Mus musculus (Mouse).